A 23-amino-acid chain; its full sequence is U3-ctenitoxin-Co1a (23 aa).

2 cysteine pairs are disulfide-bonded: Cys-2-Cys-17 and Cys-9-Cys-22.

Expressed by the venom gland.

The protein resides in the secreted. Its function is as follows. Antagonist of L-type calcium channels (Cav1/CACNA1). The polypeptide is U3-ctenitoxin-Co1a (Ctenus ornatus (Brazilian spider)).